Consider the following 487-residue polypeptide: UDP-glucose flavonoid 3-O-glucosyltransferase 7 (487 aa).

Residue His23 is the Proton acceptor of the active site. His23 is an an anthocyanidin binding site. Asp121 (charge relay) is an active-site residue. 7 residues coordinate UDP-alpha-D-glucose: Ala345, Gln347, His362, Trp365, Asn366, Ser367, and Glu370. Gly385 serves as a coordination point for an anthocyanidin. 2 residues coordinate UDP-alpha-D-glucose: Glu386 and Gln387.

It belongs to the UDP-glycosyltransferase family. In terms of tissue distribution, strongly expressed in achenes and receptacles.

It carries out the reaction a flavonol + UDP-alpha-D-glucose = a flavonol 3-O-beta-D-glucoside + UDP + H(+). Broad spectrum multifunctional glucosyltransferase. Catalyzes the formation of flavonol 3-O- and 4'-O-glucosides during fruit ripening. Accepted substrates include several flavonoids, hydroxycoumarins and beta-naphthols. Uses UDP-Glc as a sugar donor, but not UDP-Gal or UDP-GlcUA. May also be involved in detoxification of xenobiotics. The protein is UDP-glucose flavonoid 3-O-glucosyltransferase 7 of Fragaria ananassa (Strawberry).